We begin with the raw amino-acid sequence, 1038 residues long: E3 ubiquitin-protein ligase Topors (1038 aa).

The segment at 53–96 (ESGSESGDNEAEEPVSAGPDNANAIGEPGTSASAAEENGTVERN) is disordered. The RING-type zinc finger occupies 102 to 141 (CAICLSRCRRKCFTDSCMHQFCFKCLCEWSKIKPECPLCK). The tract at residues 495–682 (AAANAEVAAI…SSDSSTTNSE (188 aa)) is interaction with hairy/hry. Disordered stretches follow at residues 627 to 858 (DQLR…SSTA) and 972 to 1038 (GESE…LLPY). Residues 633–642 (RSIRSKKSRR) show a composition bias toward basic residues. Over residues 643–668 (SSMPARSDSGSSPSSCSSSSFHFSSS) the composition is skewed to low complexity. Basic residues predominate over residues 686–699 (KKSRKRVANNKRSK). The span at 723 to 744 (QQQISQKKPQRQPESSSDSPSS) shows a compositional bias: low complexity. Residues 792-801 (ATLEDRKPVK) are compositionally biased toward basic and acidic residues. A Phosphothreonine modification is found at T820. A Phosphoserine modification is found at S822. Over residues 841 to 858 (SHSNQSSQSASLASSSTA) the composition is skewed to low complexity. The span at 987 to 1031 (EEQDEEDEEDEDQEEDDQEEEKAAEEEEEEEEDDDDSDNHDENDE) shows a compositional bias: acidic residues.

As to quaternary structure, interacts with hairy/hry, p53 and Top1. Interacts with the gypsy chromatin insulator complex, composed of Cp190, mod(mdg4) and su(Hw); interacts directly with mod(mdg4) and su(Hw). Interacts with Lam/lamin.

It is found in the nucleus. The protein resides in the chromosome. It catalyses the reaction S-ubiquitinyl-[E2 ubiquitin-conjugating enzyme]-L-cysteine + [acceptor protein]-L-lysine = [E2 ubiquitin-conjugating enzyme]-L-cysteine + N(6)-ubiquitinyl-[acceptor protein]-L-lysine.. Functions as a ubiquitin-protein E3 ligase. Negatively regulates the transcriptional repressor hairy/hry by promoting its ubiquitination and subsequent degradation. Also directs the nuclear organization of the gypsy chromatin insulator. Chromatin insulators are regulatory elements which establish independent domains of transcriptional activity within eukaryotic genomes. Insulators have two defining properties; they can block the communication between an enhancer and a promoter when placed between them, and can also buffer transgenes from position effect variegation (PEV). Insulators are proposed to structure the chromatin fiber into independent domains of differing transcriptional potential by promoting the formation of distinct chromatin loops. This chromatin looping may require the formation of insulator bodies, where homotypic interactions between individual subunits of the insulator complex could promote the clustering of widely spaced insulators at the nuclear periphery. Within the gypsy insulator complex, this protein may promote formation of nuclear insulator bodies by recruiting individual insulator complexes to the nuclear lamina. The polypeptide is E3 ubiquitin-protein ligase Topors (Topors) (Drosophila melanogaster (Fruit fly)).